Reading from the N-terminus, the 280-residue chain is Bis(5'-nucleosyl)-tetraphosphatase, symmetrical (280 aa).

It belongs to the Ap4A hydrolase family.

It catalyses the reaction P(1),P(4)-bis(5'-adenosyl) tetraphosphate + H2O = 2 ADP + 2 H(+). In terms of biological role, hydrolyzes diadenosine 5',5'''-P1,P4-tetraphosphate to yield ADP. This is Bis(5'-nucleosyl)-tetraphosphatase, symmetrical from Escherichia coli O17:K52:H18 (strain UMN026 / ExPEC).